We begin with the raw amino-acid sequence, 429 residues long: 3-phosphoshikimate 1-carboxyvinyltransferase (429 aa).

Positions 23, 24, and 28 each coordinate 3-phosphoshikimate. Lys-23 is a phosphoenolpyruvate binding site. Gly-95 and Arg-123 together coordinate phosphoenolpyruvate. Ser-168, Gln-170, Asp-316, and Lys-343 together coordinate 3-phosphoshikimate. Gln-170 lines the phosphoenolpyruvate pocket. Asp-316 functions as the Proton acceptor in the catalytic mechanism. Phosphoenolpyruvate contacts are provided by Arg-347 and Arg-389.

It belongs to the EPSP synthase family. As to quaternary structure, monomer.

The protein resides in the cytoplasm. It carries out the reaction 3-phosphoshikimate + phosphoenolpyruvate = 5-O-(1-carboxyvinyl)-3-phosphoshikimate + phosphate. The protein operates within metabolic intermediate biosynthesis; chorismate biosynthesis; chorismate from D-erythrose 4-phosphate and phosphoenolpyruvate: step 6/7. Functionally, catalyzes the transfer of the enolpyruvyl moiety of phosphoenolpyruvate (PEP) to the 5-hydroxyl of shikimate-3-phosphate (S3P) to produce enolpyruvyl shikimate-3-phosphate and inorganic phosphate. This is 3-phosphoshikimate 1-carboxyvinyltransferase from Bacillus cereus (strain B4264).